The following is a 388-amino-acid chain: Phosphoglycerate kinase (388 aa).

Residues 24–26 (DLN), R37, 56–59 (RGGR), R117, and R165 contribute to the substrate site. Positions 26–136 (NVPLDSDGEQ…RRPRNVQGRR (111 aa)) are disordered. Residues 34–55 (EQGRITDPGPDHRVGADVERTG) show a composition bias toward basic and acidic residues. Basic residues predominate over residues 102-136 (GGHRRPGPRRGVDRRRRPAAGKHPVRRPRNVQGRR). ATP contacts are provided by residues K215, G303, E334, and 363–366 (GGDS).

Belongs to the phosphoglycerate kinase family. Monomer.

The protein resides in the cytoplasm. It catalyses the reaction (2R)-3-phosphoglycerate + ATP = (2R)-3-phospho-glyceroyl phosphate + ADP. The protein operates within carbohydrate degradation; glycolysis; pyruvate from D-glyceraldehyde 3-phosphate: step 2/5. The sequence is that of Phosphoglycerate kinase (pgk) from Mycobacterium avium.